The primary structure comprises 105 residues: Prokineticin-1 (105 aa).

Positions M1 to C19 are cleaved as a signal peptide. Intrachain disulfides connect C26-C38, C32-C50, C37-C78, C60-C86, and C80-C96.

The protein belongs to the AVIT (prokineticin) family. As to expression, highly expressed in liver and ovary and weakly expressed in testis and placenta. Expressed in mucosa and mesenchyme of embryonic gut during enteric nervous system development (at protein level). Predominantly expressed in kidney and liver. Also expressed in lung, ovary, placenta and testis. In fetal liver, is restricted to and highly expressed in hepatocytes. In adult kidney, expression is restricted to the endothelial tubule cells. In placenta, expressed throughout gestation.

The protein localises to the secreted. Potently contracts gastrointestinal (GI) smooth muscle. Induces proliferation, migration and fenestration (the formation of membrane discontinuities) in capillary endothelial cells. Induces proliferation and differentiation, but not migration, of enteric neural crest cells. Directly influences neuroblastoma progression by promoting the proliferation and migration of neuroblastoma cells. Positively regulates PTGS2 expression and prostaglandin synthesis. May play a role in placentation. May play a role in normal and pathological testis angiogenesis. This chain is Prokineticin-1, found in Mus musculus (Mouse).